Consider the following 133-residue polypeptide: Arginine decarboxylase proenzyme (133 aa).

Residue Ser81 is the Schiff-base intermediate with substrate; via pyruvic acid of the active site. Ser81 carries the post-translational modification Pyruvic acid (Ser); by autocatalysis. The Proton acceptor; for processing activity role is filled by His86. Residue Cys101 is the Proton donor; for catalytic activity of the active site.

This sequence belongs to the prokaryotic AdoMetDC family. Type 1 subfamily. In terms of assembly, heterooctamer of four alpha and four beta chains arranged as a tetramer of alpha/beta heterodimers. It depends on pyruvate as a cofactor. In terms of processing, is synthesized initially as an inactive proenzyme. Formation of the active enzyme involves a self-maturation process in which the active site pyruvoyl group is generated from an internal serine residue via an autocatalytic post-translational modification. Two non-identical subunits are generated from the proenzyme in this reaction, and the pyruvate is formed at the N-terminus of the alpha chain, which is derived from the carboxyl end of the proenzyme. The post-translation cleavage follows an unusual pathway, termed non-hydrolytic serinolysis, in which the side chain hydroxyl group of the serine supplies its oxygen atom to form the C-terminus of the beta chain, while the remainder of the serine residue undergoes an oxidative deamination to produce ammonia and the pyruvoyl group blocking the N-terminus of the alpha chain.

It carries out the reaction L-arginine + H(+) = agmatine + CO2. It participates in amine and polyamine biosynthesis; agmatine biosynthesis; agmatine from L-arginine: step 1/1. In terms of biological role, specifically catalyzes the decarboxylation of L-arginine to agmatine. Has no S-adenosylmethionine decarboxylase (AdoMetDC) activity. The chain is Arginine decarboxylase proenzyme from Pyrobaculum arsenaticum (strain DSM 13514 / JCM 11321 / PZ6).